The chain runs to 494 residues: UDP-N-acetylmuramate--L-alanine ligase (494 aa).

Residue 140–146 (GTHGKTT) participates in ATP binding.

The protein belongs to the MurCDEF family.

The protein localises to the cytoplasm. The catalysed reaction is UDP-N-acetyl-alpha-D-muramate + L-alanine + ATP = UDP-N-acetyl-alpha-D-muramoyl-L-alanine + ADP + phosphate + H(+). It functions in the pathway cell wall biogenesis; peptidoglycan biosynthesis. Its function is as follows. Cell wall formation. In Nostoc sp. (strain PCC 7120 / SAG 25.82 / UTEX 2576), this protein is UDP-N-acetylmuramate--L-alanine ligase.